The primary structure comprises 312 residues: tRNA-cytidine(32) 2-sulfurtransferase (312 aa).

Residues Ser-39–Ser-44 carry the PP-loop motif motif. The [4Fe-4S] cluster site is built by Cys-114, Cys-117, and Cys-205.

This sequence belongs to the TtcA family. Homodimer. Mg(2+) serves as cofactor. It depends on [4Fe-4S] cluster as a cofactor.

Its subcellular location is the cytoplasm. It carries out the reaction cytidine(32) in tRNA + S-sulfanyl-L-cysteinyl-[cysteine desulfurase] + AH2 + ATP = 2-thiocytidine(32) in tRNA + L-cysteinyl-[cysteine desulfurase] + A + AMP + diphosphate + H(+). It functions in the pathway tRNA modification. Its function is as follows. Catalyzes the ATP-dependent 2-thiolation of cytidine in position 32 of tRNA, to form 2-thiocytidine (s(2)C32). The sulfur atoms are provided by the cysteine/cysteine desulfurase (IscS) system. The polypeptide is tRNA-cytidine(32) 2-sulfurtransferase (Cupriavidus pinatubonensis (strain JMP 134 / LMG 1197) (Cupriavidus necator (strain JMP 134))).